A 51-amino-acid chain; its full sequence is Insulin (51 aa).

Intrachain disulfides connect Cys-7–Cys-37, Cys-19–Cys-50, and Cys-36–Cys-41.

This sequence belongs to the insulin family. As to quaternary structure, heterodimer of a B chain and an A chain linked by two disulfide bonds.

Its subcellular location is the secreted. Functionally, insulin decreases blood glucose concentration. It increases cell permeability to monosaccharides, amino acids and fatty acids. It accelerates glycolysis, the pentose phosphate cycle, and glycogen synthesis in liver. In Hystrix cristata (North African crested porcupine), this protein is Insulin (INS).